The following is a 367-amino-acid chain: Zinc transport system membrane protein TroD (367 aa).

The next 9 membrane-spanning stretches (helical) occupy residues Val-5 to Leu-25, Ile-28 to Phe-48, Phe-56 to Leu-76, Ala-87 to Ala-107, Ser-140 to Lys-160, Val-170 to Val-190, Val-201 to Thr-221, Leu-224 to Phe-244, and Gly-251 to Phe-271.

The protein belongs to the ABC-3 integral membrane protein family.

Its subcellular location is the cell membrane. Part of an ATP-driven transport system TroABCD for zinc. This chain is Zinc transport system membrane protein TroD (troD), found in Treponema pallidum (strain Nichols).